The sequence spans 508 residues: Replication factor C large subunit (508 aa).

43–50 (GSPGIGKT) serves as a coordination point for ATP. Positions 425–508 (AVEHSGGVFE…DQQSGLSDFM (84 aa)) are disordered. 2 stretches are compositionally biased toward acidic residues: residues 443–461 (GDSD…EESG) and 483–500 (TTDD…DDDQ).

The protein belongs to the activator 1 small subunits family. RfcL subfamily. Heteromultimer composed of small subunits (RfcS) and large subunits (RfcL).

Its function is as follows. Part of the RFC clamp loader complex which loads the PCNA sliding clamp onto DNA. In Haloarcula marismortui (strain ATCC 43049 / DSM 3752 / JCM 8966 / VKM B-1809) (Halobacterium marismortui), this protein is Replication factor C large subunit.